The primary structure comprises 167 residues: E1B protein, small T-antigen (167 aa).

Positions G143 to L167 are disordered.

The protein belongs to the adenoviridae E1B 19 kDa protein family.

The protein resides in the host cell membrane. Its subcellular location is the host nucleus envelope. It localises to the host nucleus lamina. Putative adenovirus Bcl-2 homolog that inhibits apoptosis induced by TNF or FAS pathways, as well as p53-mediated apoptosis. Without E1B 19K function, virus production is compromised because of premature death of host cell. Interacts with Bax protein in cell lysates. In Human adenovirus F serotype 40 (HAdV-40), this protein is E1B protein, small T-antigen.